The sequence spans 316 residues: tRNA dimethylallyltransferase (316 aa).

Residue 17 to 24 participates in ATP binding; the sequence is GPTASGKT. 19–24 provides a ligand contact to substrate; that stretch reads TASGKT. Interaction with substrate tRNA regions lie at residues 42 to 45, 166 to 170, and 247 to 252; these read DSAL, QRLSR, and RCVGYR.

It belongs to the IPP transferase family. As to quaternary structure, monomer. Mg(2+) is required as a cofactor.

The catalysed reaction is adenosine(37) in tRNA + dimethylallyl diphosphate = N(6)-dimethylallyladenosine(37) in tRNA + diphosphate. Functionally, catalyzes the transfer of a dimethylallyl group onto the adenine at position 37 in tRNAs that read codons beginning with uridine, leading to the formation of N6-(dimethylallyl)adenosine (i(6)A). The polypeptide is tRNA dimethylallyltransferase (Salmonella typhi).